A 145-amino-acid chain; its full sequence is MDSNKDERAYAQWVIIILHNVGSSPFKIANLGLSWGKLYADGNKDKEVYPSDYNGKTVGPDEKIQINSCGRENASSGTEGSFDIVDPNDGNKTIRHFYWECPWGSKRNTWTPSGSNTKWMVEWSGQNLDSGALGTITVDVLRKGN.

Residues 1–8 constitute a propeptide that is removed on maturation; it reads MDSNKDER.

This sequence belongs to the aegerolysin family.

The protein is Aegerolysin Aa-Pri1 (AA-PRI1) of Cyclocybe aegerita (Black poplar mushroom).